The following is a 346-amino-acid chain: UDP-3-O-acylglucosamine N-acyltransferase (346 aa).

Residue His253 is the Proton acceptor of the active site.

It belongs to the transferase hexapeptide repeat family. LpxD subfamily. As to quaternary structure, homotrimer.

The enzyme catalyses a UDP-3-O-[(3R)-3-hydroxyacyl]-alpha-D-glucosamine + a (3R)-hydroxyacyl-[ACP] = a UDP-2-N,3-O-bis[(3R)-3-hydroxyacyl]-alpha-D-glucosamine + holo-[ACP] + H(+). It functions in the pathway bacterial outer membrane biogenesis; LPS lipid A biosynthesis. Its function is as follows. Catalyzes the N-acylation of UDP-3-O-acylglucosamine using 3-hydroxyacyl-ACP as the acyl donor. Is involved in the biosynthesis of lipid A, a phosphorylated glycolipid that anchors the lipopolysaccharide to the outer membrane of the cell. In Rickettsia felis (strain ATCC VR-1525 / URRWXCal2) (Rickettsia azadi), this protein is UDP-3-O-acylglucosamine N-acyltransferase.